Consider the following 73-residue polypeptide: UPF0235 protein HY04AAS1_1378 (73 aa).

It belongs to the UPF0235 family.

In Hydrogenobaculum sp. (strain Y04AAS1), this protein is UPF0235 protein HY04AAS1_1378.